A 276-amino-acid chain; its full sequence is AT-hook motif nuclear-localized protein 17 (276 aa).

Residues 1–10 (MKGEYREQKS) are compositionally biased toward basic and acidic residues. Disordered stretches follow at residues 1 to 80 (MKGE…RDTD) and 212 to 248 (AEEEQKHSAGTGEREGQSPPVSGGGEESGQMAGSGGE). Low complexity-rich tracts occupy residues 20–31 (HQQQQQQQQQQH) and 40–49 (SSTVTPTVDD). A DNA-binding region (a.T hook) is located at residues 56–68 (RRPRGRPPGSKNK). The PPC domain maps to 80 to 230 (DPPMSPYILE…GTGEREGQSP (151 aa)). Residues 212–227 (AEEEQKHSAGTGEREG) are compositionally biased toward basic and acidic residues. Gly residues predominate over residues 233 to 248 (SGGGEESGQMAGSGGE).

It is found in the nucleus. Transcription factor that specifically binds AT-rich DNA sequences related to the nuclear matrix attachment regions (MARs). The chain is AT-hook motif nuclear-localized protein 17 from Arabidopsis thaliana (Mouse-ear cress).